The chain runs to 214 residues: Large ribosomal subunit protein uL3 (214 aa).

The interval 129–155 (FGRGPMSHGSKNHRRPGSVGAGTTPGR) is disordered.

It belongs to the universal ribosomal protein uL3 family. In terms of assembly, part of the 50S ribosomal subunit. Forms a cluster with proteins L14 and L19.

In terms of biological role, one of the primary rRNA binding proteins, it binds directly near the 3'-end of the 23S rRNA, where it nucleates assembly of the 50S subunit. The protein is Large ribosomal subunit protein uL3 of Synechococcus sp. (strain JA-3-3Ab) (Cyanobacteria bacterium Yellowstone A-Prime).